Consider the following 424-residue polypeptide: Tyrosine--tRNA ligase (424 aa).

Tyrosine 37 is an L-tyrosine binding site. Positions 42–51 match the 'HIGH' region motif; the sequence is PTADSLHLGH. The L-tyrosine site is built by tyrosine 175 and glutamine 179. The short motif at 235–239 is the 'KMSKS' region element; it reads KFGKT. Lysine 238 serves as a coordination point for ATP. The S4 RNA-binding domain maps to 357–414; it reads ADLQQALVNAELVPSRGQARTMIGSNAVAINGEKQADPEYVFTDADRLFGRYTLLRRG.

The protein belongs to the class-I aminoacyl-tRNA synthetase family. TyrS type 1 subfamily. As to quaternary structure, homodimer.

It localises to the cytoplasm. The enzyme catalyses tRNA(Tyr) + L-tyrosine + ATP = L-tyrosyl-tRNA(Tyr) + AMP + diphosphate + H(+). Its function is as follows. Catalyzes the attachment of tyrosine to tRNA(Tyr) in a two-step reaction: tyrosine is first activated by ATP to form Tyr-AMP and then transferred to the acceptor end of tRNA(Tyr). In Yersinia pestis bv. Antiqua (strain Antiqua), this protein is Tyrosine--tRNA ligase.